Consider the following 107-residue polypeptide: Putative septation protein SpoVG (107 aa).

The tract at residues 82 to 107 (ETDEVIPDKNAQPSSDSEDNGSEEEA) is disordered. Residues 97 to 107 (DSEDNGSEEEA) are compositionally biased toward acidic residues.

Belongs to the SpoVG family.

Functionally, could be involved in septation. In Staphylococcus carnosus (strain TM300), this protein is Putative septation protein SpoVG.